A 205-amino-acid polypeptide reads, in one-letter code: uncharacterized protein (205 aa).

Positions 10–75 (QDLLSAVDQQ…AANLMTVMTD (66 aa)) form a coiled coil. The disordered stretch occupies residues 108–141 (MPLPSSNTNNDQTSPPASGKTSETPKKNPTNAMF). The segment covering 111 to 141 (PSSNTNNDQTSPPASGKTSETPKKNPTNAMF) has biased composition (polar residues).

This sequence belongs to the asfivirus K205R family.

Its subcellular location is the host cytoplasm. In terms of biological role, induces host endoplasmic reticulum stress and consequently activates autophagy and NF-kappa-B signaling pathway. In turn, may induce autophagy-mediated STING1 degradation and innate immune evasion. This is an uncharacterized protein from Ornithodoros (relapsing fever ticks).